Consider the following 569-residue polypeptide: Formate--tetrahydrofolate ligase (569 aa).

68–75 (TPAGEGKT) is a binding site for ATP.

The protein belongs to the formate--tetrahydrofolate ligase family.

The enzyme catalyses (6S)-5,6,7,8-tetrahydrofolate + formate + ATP = (6R)-10-formyltetrahydrofolate + ADP + phosphate. It participates in one-carbon metabolism; tetrahydrofolate interconversion. The sequence is that of Formate--tetrahydrofolate ligase from Psychrobacter sp. (strain PRwf-1).